The sequence spans 1312 residues: DNA repair protein RAD50 (1312 aa).

10 residues coordinate ATP: arginine 13, asparagine 36, glycine 37, glycine 39, lysine 40, threonine 41, threonine 42, isoleucine 65, aspartate 67, and glutamine 158. Threonine 41 is a binding site for Mg(2+). Mg(2+) is bound at residue glutamine 158. 2 coiled-coil regions span residues 185-347 (TKAL…LIRR) and 403-558 (QDLT…LQND). Serine 469 bears the Phosphoserine mark. Threonine 568 is modified (phosphothreonine). The stretch at 640–678 (DCTIDEYNDVLEETELSYKTALENLKMHQTTLEFNRKAL) forms a coiled coil. A Zinc-hook domain is found at 640-741 (DCTIDEYNDV…SLRLLEKHII (102 aa)). 2 residues coordinate Zn(2+): cysteine 687 and cysteine 690. Coiled coils occupy residues 712–741 (DANFEKTLKDTVQNEKEYLHSLRLLEKHII) and 787–1108 (LAES…DIEK).

Belongs to the SMC family. RAD50 subfamily. As to quaternary structure, component of the MRN complex composed of two heterodimers RAD50 and MRE11 associated with a single XRS2. The MRN complexes dimerize on DNA to form joined MRN-MRN oligomers required for DNA double-strand break repair. Requires Zn(2+) as cofactor.

Its subcellular location is the nucleus. The protein localises to the chromosome. The catalysed reaction is ATP + H2O = ADP + phosphate + H(+). Component of the MRN complex, which plays a central role in double-strand break (DSB) repair, DNA recombination, maintenance of telomere integrity and meiosis. The MRN complex is involved in the repair of DNA double-strand breaks (DSBs) via homologous recombination (HR), an error-free mechanism which primarily occurs during S and G2 phases. The complex (1) mediates the end resection of damaged DNA, which generates proper single-stranded DNA, a key initial steps in HR, and is (2) required for the recruitment of other repair factors and efficient activation of TEL1/ATM and ATR upon DNA damage. The MRN complex possesses single-strand endonuclease activity and double-strand-specific 3'-5' exonuclease activity, which are provided by MRE11, to initiate end resection, which is required for single-strand invasion and recombination. Within the complex, RAD50 is both required to bind DNA ends and hold them in close proximity and regulate the activity of MRE11. RAD50 provides an ATP-dependent control of MRE11 by positioning DNA ends into the MRE11 active site: ATP-binding induces a large structural change from an open form with accessible MRE11 nuclease sites into a closed form. The MRN complex is also required for the processing of R-loops. The sequence is that of DNA repair protein RAD50 from Saccharomyces cerevisiae (strain ATCC 204508 / S288c) (Baker's yeast).